Here is a 228-residue protein sequence, read N- to C-terminus: Ribulose-phosphate 3-epimerase-like protein 1 (228 aa).

Residue Ser10 coordinates substrate. A divalent metal cation-binding residues include His35, Asp37, and His70. The active-site Proton acceptor is Asp37. Substrate contacts are provided by residues His70, 146–149 (GFGE), 175–177 (DGG), and 197–198 (GS). Asp175 lines the a divalent metal cation pocket. The Proton donor role is filled by Asp175.

This sequence belongs to the ribulose-phosphate 3-epimerase family. As to quaternary structure, homodimer. The cofactor is Fe(2+). Mn(2+) serves as cofactor. It depends on Zn(2+) as a cofactor. Requires Co(2+) as cofactor.

It catalyses the reaction D-ribulose 5-phosphate = D-xylulose 5-phosphate. The protein operates within carbohydrate degradation. In terms of biological role, catalyzes the reversible epimerization of D-ribulose 5-phosphate to D-xylulose 5-phosphate. This chain is Ribulose-phosphate 3-epimerase-like protein 1 (RPEL1), found in Homo sapiens (Human).